Here is a 310-residue protein sequence, read N- to C-terminus: tRNA uridine(34) hydroxylase (310 aa).

In terms of domain architecture, Rhodanese spans 134–232 (DDPDTLLIDT…YFEEVSQSES (99 aa)). The Cysteine persulfide intermediate role is filled by C192.

Belongs to the TrhO family.

It carries out the reaction uridine(34) in tRNA + AH2 + O2 = 5-hydroxyuridine(34) in tRNA + A + H2O. Its function is as follows. Catalyzes oxygen-dependent 5-hydroxyuridine (ho5U) modification at position 34 in tRNAs. This chain is tRNA uridine(34) hydroxylase, found in Prochlorococcus marinus (strain MIT 9303).